The sequence spans 370 residues: Pyruvate dehydrogenase E1 component subunit alpha (370 aa).

In terms of assembly, heterodimer of an alpha and a beta chain. Thiamine diphosphate serves as cofactor.

It catalyses the reaction N(6)-[(R)-lipoyl]-L-lysyl-[protein] + pyruvate + H(+) = N(6)-[(R)-S(8)-acetyldihydrolipoyl]-L-lysyl-[protein] + CO2. In terms of biological role, the pyruvate dehydrogenase complex catalyzes the overall conversion of pyruvate to acetyl-CoA and CO(2). It contains multiple copies of three enzymatic components: pyruvate dehydrogenase (E1), dihydrolipoamide acetyltransferase (E2) and lipoamide dehydrogenase (E3). This Staphylococcus epidermidis (strain ATCC 35984 / DSM 28319 / BCRC 17069 / CCUG 31568 / BM 3577 / RP62A) protein is Pyruvate dehydrogenase E1 component subunit alpha (pdhA).